The sequence spans 223 residues: MSAESGVAALLRLMAWLSPAFPVGGFSYSGGLEKAVEDGRVCDAAGLGGWVETLLRHGSLWNDAVFLAHAWRSSQDTTALSETANLGRALAGSAERYRETVLLGDAFIAAASAWPHAVLELLPKEAPYPVAIGAVAAGHGVPLRETLAAFLHAGVSQIVSAGIRLGVAGQKDGVAILAASEAVIEEIAARAALSTLDDLGSATVIADTAAMRHETQGTRLFRS.

Belongs to the UreF family. In terms of assembly, ureD, UreF and UreG form a complex that acts as a GTP-hydrolysis-dependent molecular chaperone, activating the urease apoprotein by helping to assemble the nickel containing metallocenter of UreC. The UreE protein probably delivers the nickel.

Its subcellular location is the cytoplasm. Its function is as follows. Required for maturation of urease via the functional incorporation of the urease nickel metallocenter. This Agrobacterium fabrum (strain C58 / ATCC 33970) (Agrobacterium tumefaciens (strain C58)) protein is Urease accessory protein UreF.